Here is a 346-residue protein sequence, read N- to C-terminus: Sensor protein kinase GraS (346 aa).

2 helical membrane passes run 15–35 (MNWI…SLID) and 43–63 (LFYI…LTYF). The Histidine kinase domain maps to 126–332 (EFVHDIKTPV…TVRLIFPLQN (207 aa)).

In terms of assembly, interacts with GraX.

It localises to the cell membrane. It carries out the reaction ATP + protein L-histidine = ADP + protein N-phospho-L-histidine.. Member of the two-component regulatory system GraR/GraS involved in resistance against cationic antimicrobial peptides (CAMPs). Functions as a sensor protein kinase which phosphorylates GraR through the auxiliary protein GraX. In turn, GraR up-regulates many genes such as adhesins, exoproteins, transporters, toxins, and proteins involved in cell wall synthesis. Down-regulates the expression of many genes involved in RNA and amino acid synthesis or glycolysis. The chain is Sensor protein kinase GraS (graS) from Staphylococcus aureus (strain MSSA476).